We begin with the raw amino-acid sequence, 742 residues long: Feeding circuit activating peptides (742 aa).

An N-terminal signal peptide occupies residues 1–22 (MTFAASFRALLCVLFCAALVHC). Positions 23 to 98 (KTRTKRYVPH…YGALADRDVD (76 aa)) are excised as a propeptide. The propeptide at 117-131 (GSLDAIPQDTDASSD) is connecting peptide. Propeptides lie at residues 164-168 (GSGAE), 202-220 (RGTG…PWGS), 236-253 (DTEL…TEVN), 271-275 (SGEAG), 293-297 (ADDQG), 315-321 (FDNSAGE), 339-341 (AGD), 359-366 (FDNDISGQ), 384-388 (SDQDN), 406-410 (ADDDG), 428-432 (ADEDD), 450-454 (GDEDD), 472-476 (ADEDD), 494-498 (SDEDD), 516-520 (SDEDD), 538-542 (ADEDD), 560-564 (NSPGL), 582-592 (NNEYYSGAENE), 610-614 (DQPGE), and 647-742 (NSAD…AGQM).

As to expression, expressed in pleural, pedal, abdominal, buccal and cerebral ganglia.

The protein localises to the secreted. Functionally, initiates organized rhythmic motor output of feeding circuit. This is Feeding circuit activating peptides from Aplysia californica (California sea hare).